The primary structure comprises 307 residues: 4-diphosphocytidyl-2-C-methyl-D-erythritol kinase (307 aa).

Residue K14 is part of the active site. 107 to 117 contributes to the ATP binding site; it reads PVAGGMAGGSA. D149 is a catalytic residue.

It belongs to the GHMP kinase family. IspE subfamily.

The catalysed reaction is 4-CDP-2-C-methyl-D-erythritol + ATP = 4-CDP-2-C-methyl-D-erythritol 2-phosphate + ADP + H(+). The protein operates within isoprenoid biosynthesis; isopentenyl diphosphate biosynthesis via DXP pathway; isopentenyl diphosphate from 1-deoxy-D-xylulose 5-phosphate: step 3/6. In terms of biological role, catalyzes the phosphorylation of the position 2 hydroxy group of 4-diphosphocytidyl-2C-methyl-D-erythritol. The protein is 4-diphosphocytidyl-2-C-methyl-D-erythritol kinase of Thermobifida fusca (strain YX).